Reading from the N-terminus, the 626-residue chain is Colicin-Ib (626 aa).

Over residues 276 to 286 the composition is skewed to polar residues; that stretch reads QQLTQQKNTPD. Residues 276–308 form a disordered region; the sequence is QQLTQQKNTPDGKTIVSPEKFPGRSSTNHSIVV. Residues 588–612 traverse the membrane as a helical segment; the sequence is FSVMLGTPVGILGFAIIMAAVSALV.

It belongs to the channel forming colicin family.

It is found in the host membrane. In terms of biological role, this colicin is a channel-forming colicin. This class of transmembrane toxins depolarize the cytoplasmic membrane, leading to dissipation of cellular energy. Functionally, colicins are polypeptide toxins produced by and active against E.coli and closely related bacteria. The polypeptide is Colicin-Ib (cib) (Escherichia coli).